Reading from the N-terminus, the 439-residue chain is Histidinol dehydrogenase (439 aa).

NAD(+)-binding residues include tyrosine 125, glutamine 187, and asparagine 210. Substrate contacts are provided by threonine 233, glutamine 255, and histidine 258. Zn(2+) is bound by residues glutamine 255 and histidine 258. Residues glutamate 323 and histidine 324 each act as proton acceptor in the active site. Residues histidine 324, aspartate 357, glutamate 411, and histidine 416 each coordinate substrate. Aspartate 357 contributes to the Zn(2+) binding site. Histidine 416 serves as a coordination point for Zn(2+).

This sequence belongs to the histidinol dehydrogenase family. Requires Zn(2+) as cofactor.

It catalyses the reaction L-histidinol + 2 NAD(+) + H2O = L-histidine + 2 NADH + 3 H(+). It participates in amino-acid biosynthesis; L-histidine biosynthesis; L-histidine from 5-phospho-alpha-D-ribose 1-diphosphate: step 9/9. Its function is as follows. Catalyzes the sequential NAD-dependent oxidations of L-histidinol to L-histidinaldehyde and then to L-histidine. This Symbiobacterium thermophilum (strain DSM 24528 / JCM 14929 / IAM 14863 / T) protein is Histidinol dehydrogenase.